The following is a 328-amino-acid chain: MITVVGGTFSKLHKGHKALLEKAIETGNEIVIGLTSDEYVKRNKVYPAIPYKERYRNLYNYMVKKTNKFRIRPIDDRNGNAPYERDYEIIVVSPETYQRSLKINEIRIQNGLPPLKIIRVPYVLAEDLFPISSTRIINGEIDGNGRRLKPVKVAIATNNSAKLKATNDFFHKLMKNFDVIQNTDYKLETQQPFGEVTMNMATKRAMQSLGDNDYAIGIESGIVYERFSRKYFDFHYCVVIDRFGNVTRGSSSGFEVPDRIIDLIKRDMSFSQAYGKVIDTNGIDDSTGIVGKISNGRVRRYDLIMECIRNAFIPRFDPDFYDTTYTPP.

Positions 1–152 (MITVVGGTFS…GNGRRLKPVK (152 aa)) are phosphopantetheine adenylyltransferase. Residues 153–328 (VAIATNNSAK…DFYDTTYTPP (176 aa)) form an inosine/xanthosine triphosphatase region.

It in the N-terminal section; belongs to the eukaryotic CoaD family. In the C-terminal section; belongs to the YjjX NTPase family. The cofactor is Mg(2+). Mn(2+) serves as cofactor.

It localises to the cytoplasm. It carries out the reaction (R)-4'-phosphopantetheine + ATP + H(+) = 3'-dephospho-CoA + diphosphate. The enzyme catalyses XTP + H2O = XDP + phosphate + H(+). It catalyses the reaction ITP + H2O = IDP + phosphate + H(+). Its pathway is cofactor biosynthesis; coenzyme A biosynthesis. Its function is as follows. Reversibly transfers an adenylyl group from ATP to 4'-phosphopantetheine, yielding dephospho-CoA (dPCoA) and pyrophosphate. In terms of biological role, phosphatase that hydrolyzes non-canonical purine nucleotides such as XTP and ITP to their respective diphosphate derivatives. Probably excludes non-canonical purines from DNA/RNA precursor pool, thus preventing their incorporation into DNA/RNA and avoiding chromosomal lesions. This is Bifunctional phosphopantetheine adenylyltransferase/NTP phosphatase (coaD) from Thermoplasma volcanium (strain ATCC 51530 / DSM 4299 / JCM 9571 / NBRC 15438 / GSS1).